The primary structure comprises 449 residues: Alpha-L-fucosidase (449 aa).

A signal peptide spans 1–19; that stretch reads MGLLLLLSLLSACFQPRYA. N156, N224, N362, and N375 each carry an N-linked (GlcNAc...) asparagine glycan.

The protein belongs to the glycosyl hydrolase 29 family. As to quaternary structure, homotetramer.

The protein resides in the secreted. It catalyses the reaction an alpha-L-fucoside + H2O = L-fucose + an alcohol. Alpha-L-fucosidase is responsible for hydrolyzing the alpha-1,6-linked fucose joined to the reducing-end N-acetylglucosamine of the carbohydrate moieties of glycoproteins. This Branchiostoma floridae (Florida lancelet) protein is Alpha-L-fucosidase.